Reading from the N-terminus, the 349-residue chain is MTSSADSGRDAAWLDDFLALTLAGDAPPAEAGECAARAVRWRWLGDGLLRLEPADAAQRMQSVLVSAGVHGDETAPIELLSTLVRDIARGALPLRCRLLVALGNPGAMRAGERYLDDDLNRLFGGRHAQLAASREAPRAAQLEAAAALFFSTAGRARGARWHIDMHTAIRTSVFEQFALLPHTGEPPTRTMFEWLGEAQIAAVLLHTTKGSTFSHFTAQACGALACTLELGKVMPFGANDLSRFAPADAAVRRLVSGRRDAPRGALPRAFTVVDQITKQSDALELFVANDVPNFTPFARGTLLARDGDYRYAVRHEQERIVFPNPSVKPGLRAGLLVIETTRDTHAALA.

Zn(2+) contacts are provided by His-70, Glu-73, and His-166. Glu-229 is a catalytic residue.

The protein belongs to the AspA/AstE family. Succinylglutamate desuccinylase subfamily. Requires Zn(2+) as cofactor.

The enzyme catalyses N-succinyl-L-glutamate + H2O = L-glutamate + succinate. It functions in the pathway amino-acid degradation; L-arginine degradation via AST pathway; L-glutamate and succinate from L-arginine: step 5/5. Transforms N(2)-succinylglutamate into succinate and glutamate. The chain is Succinylglutamate desuccinylase from Burkholderia mallei (strain ATCC 23344).